Consider the following 284-residue polypeptide: Diaminopimelate epimerase (284 aa).

Substrate-binding residues include asparagine 14 and asparagine 67. Cysteine 76 functions as the Proton donor in the catalytic mechanism. Residues 77–78 (GN), asparagine 166, asparagine 199, and 217–218 (ER) contribute to the substrate site. The Proton acceptor role is filled by cysteine 226. 227–228 (GT) provides a ligand contact to substrate.

This sequence belongs to the diaminopimelate epimerase family. As to quaternary structure, homodimer.

Its subcellular location is the cytoplasm. The enzyme catalyses (2S,6S)-2,6-diaminopimelate = meso-2,6-diaminopimelate. Its pathway is amino-acid biosynthesis; L-lysine biosynthesis via DAP pathway; DL-2,6-diaminopimelate from LL-2,6-diaminopimelate: step 1/1. Catalyzes the stereoinversion of LL-2,6-diaminopimelate (L,L-DAP) to meso-diaminopimelate (meso-DAP), a precursor of L-lysine and an essential component of the bacterial peptidoglycan. The sequence is that of Diaminopimelate epimerase from Bacillus subtilis (strain 168).